Here is a 1412-residue protein sequence, read N- to C-terminus: uncharacterized protein (1412 aa).

Residues 1-22 (MESINVVNSVEDLPGFNPDENV) form a disordered region. Coiled coils occupy residues 317–377 (NNDF…ILRH) and 732–800 (SKEA…SDDE). The segment at 778 to 808 (SRKRKHEDIVKEHEAEKRDSDDEDDFEEVDV) is disordered. Basic and acidic residues predominate over residues 783-797 (HEDIVKEHEAEKRDS). The span at 798 to 808 (DDEDDFEEVDV) shows a compositional bias: acidic residues.

This is an uncharacterized protein from Magallana gigas (Pacific oyster).